Reading from the N-terminus, the 1058-residue chain is Carbamoyl phosphate synthase large chain (1058 aa).

Residues 1 to 401 (MAKRTDIKKI…CLLKACRSLE (401 aa)) form a carboxyphosphate synthetic domain region. Residues R129, R169, G175, G176, R208, I210, E215, G241, I242, H243, Q284, and E298 each contribute to the ATP site. Positions 133–327 (KQLMKELGEP…IAKIAAKIAV (195 aa)) constitute an ATP-grasp 1 domain. Mg(2+)-binding residues include Q284, E298, and N300. Mn(2+)-binding residues include Q284, E298, and N300. Residues 402 to 546 (IGVDHNELKG…YSTYEWENES (145 aa)) are oligomerization domain. The interval 547–929 (IKSEKESVIV…ALYKAFEASY (383 aa)) is carbamoyl phosphate synthetic domain. One can recognise an ATP-grasp 2 domain in the interval 671-861 (EKALKDLGIP…MAQVATKLIL (191 aa)). ATP-binding residues include R707, S746, I748, E752, G777, V778, H779, S780, Q820, and E832. 3 residues coordinate Mg(2+): Q820, E832, and N834. 3 residues coordinate Mn(2+): Q820, E832, and N834. The MGS-like domain occupies 930 to 1058 (LHMPEYGTIV…ESRTFSIEAI (129 aa)). The interval 930–1058 (LHMPEYGTIV…ESRTFSIEAI (129 aa)) is allosteric domain.

It belongs to the CarB family. In terms of assembly, composed of two chains; the small (or glutamine) chain promotes the hydrolysis of glutamine to ammonia, which is used by the large (or ammonia) chain to synthesize carbamoyl phosphate. Tetramer of heterodimers (alpha,beta)4. Mg(2+) is required as a cofactor. The cofactor is Mn(2+).

It catalyses the reaction hydrogencarbonate + L-glutamine + 2 ATP + H2O = carbamoyl phosphate + L-glutamate + 2 ADP + phosphate + 2 H(+). It carries out the reaction hydrogencarbonate + NH4(+) + 2 ATP = carbamoyl phosphate + 2 ADP + phosphate + 2 H(+). Its pathway is amino-acid biosynthesis; L-arginine biosynthesis; carbamoyl phosphate from bicarbonate: step 1/1. It functions in the pathway pyrimidine metabolism; UMP biosynthesis via de novo pathway; (S)-dihydroorotate from bicarbonate: step 1/3. Large subunit of the glutamine-dependent carbamoyl phosphate synthetase (CPSase). CPSase catalyzes the formation of carbamoyl phosphate from the ammonia moiety of glutamine, carbonate, and phosphate donated by ATP, constituting the first step of 2 biosynthetic pathways, one leading to arginine and/or urea and the other to pyrimidine nucleotides. The large subunit (synthetase) binds the substrates ammonia (free or transferred from glutamine from the small subunit), hydrogencarbonate and ATP and carries out an ATP-coupled ligase reaction, activating hydrogencarbonate by forming carboxy phosphate which reacts with ammonia to form carbamoyl phosphate. The protein is Carbamoyl phosphate synthase large chain of Streptococcus equi subsp. zooepidemicus (strain H70).